The sequence spans 249 residues: Protein YIP5 (249 aa).

The next 5 helical transmembrane spans lie at 87-107, 131-151, 164-184, 188-208, and 228-248; these read LYGP…SNSI, ASII…ILVW, LYGY…PFGL, LASH…SIVF, and LLFG…LIFF.

The protein belongs to the YIP1 family. In terms of assembly, interacts with the YIP1 family members yip1 and yip4, and several Rab GTPases. The C-terminal cysteines in the Rab GTPase ypt2 are essential for the interaction. Interacts with snx3.

It is found in the membrane. Possible role in vesicle-mediated transport. May be involved in proper membrane localization of Rab GTPases. The sequence is that of Protein YIP5 from Schizosaccharomyces pombe (strain 972 / ATCC 24843) (Fission yeast).